Consider the following 436-residue polypeptide: Glutamate-1-semialdehyde 2,1-aminomutase (436 aa).

The residue at position 274 (Lys-274) is an N6-(pyridoxal phosphate)lysine.

It belongs to the class-III pyridoxal-phosphate-dependent aminotransferase family. HemL subfamily. As to quaternary structure, homodimer. It depends on pyridoxal 5'-phosphate as a cofactor.

It is found in the cytoplasm. The catalysed reaction is (S)-4-amino-5-oxopentanoate = 5-aminolevulinate. The protein operates within porphyrin-containing compound metabolism; protoporphyrin-IX biosynthesis; 5-aminolevulinate from L-glutamyl-tRNA(Glu): step 2/2. This chain is Glutamate-1-semialdehyde 2,1-aminomutase, found in Albidiferax ferrireducens (strain ATCC BAA-621 / DSM 15236 / T118) (Rhodoferax ferrireducens).